The sequence spans 508 residues: 4-trimethylaminobutyraldehyde dehydrogenase A (508 aa).

NAD(+)-binding positions include Lys194 and 246-250 (GSVPT). The Proton acceptor role is filled by Glu268. Cys302 serves as the catalytic Nucleophile. Glu405 contributes to the NAD(+) binding site.

It belongs to the aldehyde dehydrogenase family. As to quaternary structure, homotetramer.

The protein resides in the cytoplasm. It is found in the cytosol. It catalyses the reaction 4-(trimethylamino)butanal + NAD(+) + H2O = 4-(trimethylamino)butanoate + NADH + 2 H(+). The catalysed reaction is an aldehyde + NAD(+) + H2O = a carboxylate + NADH + 2 H(+). It participates in amine and polyamine biosynthesis; carnitine biosynthesis. Its function is as follows. Converts gamma-trimethylaminobutyraldehyde into gamma-butyrobetaine with high efficiency (in vitro). Can catalyze the irreversible oxidation of a broad range of aldehydes to the corresponding acids in an NAD-dependent reaction, but with low efficiency. This Danio rerio (Zebrafish) protein is 4-trimethylaminobutyraldehyde dehydrogenase A (aldh9a1a).